We begin with the raw amino-acid sequence, 396 residues long: Acetate kinase (396 aa).

Mg(2+) is bound at residue asparagine 8. ATP is bound at residue lysine 15. Residue arginine 89 coordinates substrate. Aspartate 146 functions as the Proton donor/acceptor in the catalytic mechanism. Residues 206-210 (HLGNG), 280-282 (DMR), and 328-332 (GVGEN) contribute to the ATP site. Glutamate 382 contacts Mg(2+).

Belongs to the acetokinase family. In terms of assembly, homodimer. The cofactor is Mg(2+). Requires Mn(2+) as cofactor.

The protein resides in the cytoplasm. It catalyses the reaction acetate + ATP = acetyl phosphate + ADP. Its pathway is metabolic intermediate biosynthesis; acetyl-CoA biosynthesis; acetyl-CoA from acetate: step 1/2. Its function is as follows. Catalyzes the formation of acetyl phosphate from acetate and ATP. Can also catalyze the reverse reaction. The protein is Acetate kinase of Clavibacter sepedonicus (Clavibacter michiganensis subsp. sepedonicus).